A 207-amino-acid chain; its full sequence is Large ribosomal subunit protein bL25 (207 aa).

Residues 171–207 form a disordered region; the sequence is EEETVVTVSAPRAEEEPTTTEAPEPEAVHGNDEEPVE. A compositionally biased stretch (basic and acidic residues) spans 196–207; the sequence is EAVHGNDEEPVE.

The protein belongs to the bacterial ribosomal protein bL25 family. CTC subfamily. In terms of assembly, part of the 50S ribosomal subunit; part of the 5S rRNA/L5/L18/L25 subcomplex. Contacts the 5S rRNA. Binds to the 5S rRNA independently of L5 and L18.

Functionally, this is one of the proteins that binds to the 5S RNA in the ribosome where it forms part of the central protuberance. The polypeptide is Large ribosomal subunit protein bL25 (Listeria innocua serovar 6a (strain ATCC BAA-680 / CLIP 11262)).